The following is a 137-amino-acid chain: Nucleoside diphosphate kinase (137 aa).

ATP-binding residues include Lys9, Phe57, Arg85, Thr91, Arg102, and Asn112. His115 acts as the Pros-phosphohistidine intermediate in catalysis.

The protein belongs to the NDK family. In terms of assembly, homotetramer. It depends on Mg(2+) as a cofactor.

It localises to the cytoplasm. The enzyme catalyses a 2'-deoxyribonucleoside 5'-diphosphate + ATP = a 2'-deoxyribonucleoside 5'-triphosphate + ADP. It carries out the reaction a ribonucleoside 5'-diphosphate + ATP = a ribonucleoside 5'-triphosphate + ADP. In terms of biological role, major role in the synthesis of nucleoside triphosphates other than ATP. The ATP gamma phosphate is transferred to the NDP beta phosphate via a ping-pong mechanism, using a phosphorylated active-site intermediate. This chain is Nucleoside diphosphate kinase, found in Leptospira borgpetersenii serovar Hardjo-bovis (strain L550).